A 71-amino-acid polypeptide reads, in one-letter code: uncharacterized protein (71 aa).

This is an uncharacterized protein from Vaccinia virus (strain Western Reserve) (VACV).